Here is a 232-residue protein sequence, read N- to C-terminus: Movement and silencing protein TGBp1 (232 aa).

Positions 1-117 (MDVLINKLAS…GPGIVADFVC (117 aa)) constitute a (+)RNA virus helicase ATP-binding domain. The (+)RNA virus helicase C-terminal domain maps to 118 to 232 (NKTKRFGSST…ACPDATFAPS (115 aa)).

Belongs to the Tymovirales TGBp1 protein family. As to quaternary structure, homodimer and homooligomer. Interacts with capsid protein. Interacts with host AGO1; this interaction targets the host protein for degradation, thereby suppressing the antiviral RNA silencing.

The protein resides in the host cytoplasm. Functionally, transports viral genome to neighboring plant cells directly through plasmosdesmata, without any budding. The movement protein allows efficient cell to cell propagation, by bypassing the host cell wall barrier. Increases plasmodesma size exclusion limit. Acts as a suppressor of RNA-mediated gene silencing, also known as post-transcriptional gene silencing (PTGS), a mechanism of plant viral defense that limits the accumulation of viral RNAs. The sequence is that of Movement and silencing protein TGBp1 from Populus balsamifera (Balsam poplar).